Reading from the N-terminus, the 281-residue chain is sn-glycerol-3-phosphate transport system permease protein UgpE (281 aa).

The next 6 membrane-spanning stretches (helical) occupy residues leucine 16–leucine 36, phenylalanine 85–phenylalanine 105, phenylalanine 113–valine 133, leucine 142–phenylalanine 162, alanine 202–isoleucine 222, and tryptophan 247–valine 267. Residues leucine 77 to methionine 268 form the ABC transmembrane type-1 domain.

It belongs to the binding-protein-dependent transport system permease family. UgpAE subfamily. The complex is composed of two ATP-binding proteins (UgpC), two transmembrane proteins (UgpA and UgpE) and a solute-binding protein (UgpB).

Its subcellular location is the cell inner membrane. Part of the ABC transporter complex UgpBAEC involved in sn-glycerol-3-phosphate (G3P) import. Probably responsible for the translocation of the substrate across the membrane. This is sn-glycerol-3-phosphate transport system permease protein UgpE (ugpE) from Escherichia coli O6:K15:H31 (strain 536 / UPEC).